A 137-amino-acid chain; its full sequence is Sch210972 biosynthesis cluster protein E (137 aa).

The segment covering methionine 1 to proline 12 has biased composition (polar residues). Residues methionine 1–glycine 137 form a disordered region. Low complexity predominate over residues proline 15–threonine 27. A compositionally biased stretch (polar residues) spans glycine 51–arginine 71. Basic and acidic residues predominate over residues aspartate 94–lysine 109.

It functions in the pathway secondary metabolite biosynthesis. Its function is as follows. Part of the gene cluster that mediates the biosynthesis of the tetramic acid Sch210972, a potential anti-HIV fungal natural product that contains a decalin core. The PKS module of cghG together with the enoylreductase cghC catalyze the formation of the polyketide unit which is then conjugated to 4-hydroxyl-4-methyl glutamate (HMG) by the condensation domain of the cghG NRPS module. One unique structural feature of Sch210972 is the tetramic acid motif proposed to be derived from the non-proteinogenic amino acid HMG, by a Dieckmann-type condensation catalyzed by the reductase domain of cghG. The aldolase cghB catalyzes the aldol condensation of 2 molecules of pyruvic acid to yield the intermediate 4-hydroxyl-4-methyl-2-oxoglutarate (HMOG), which can then be stereoselectively transaminated by an unidentified enzyme to form HMG. The Diels-Alderase cghA then uses the Dieckmann product released by cghG as substrate and catalyzes the Diels-Alder cycloaddition to form the decalin ring of Sch210972. CghA also suppresses the nonenzymatic formation of the alternative stereoisomer. This is Sch210972 biosynthesis cluster protein E from Chaetomium globosum (strain ATCC 6205 / CBS 148.51 / DSM 1962 / NBRC 6347 / NRRL 1970) (Soil fungus).